We begin with the raw amino-acid sequence, 78 residues long: Sec-independent protein translocase protein TatA (78 aa).

The chain crosses the membrane as a helical span at residues 1 to 21 (MGSLSIWHWLIVLLIVALVFG). Basic and acidic residues-rich tracts occupy residues 39-57 (FKEGMKDGETPEGQQRDQL) and 65-78 (VDAKEKAPHSGDSR). The segment at 39 to 78 (FKEGMKDGETPEGQQRDQLSRTNTVDVDAKEKAPHSGDSR) is disordered.

Belongs to the TatA/E family. As to quaternary structure, the Tat system comprises two distinct complexes: a TatABC complex, containing multiple copies of TatA, TatB and TatC subunits, and a separate TatA complex, containing only TatA subunits. Substrates initially bind to the TatABC complex, which probably triggers association of the separate TatA complex to form the active translocon.

The protein resides in the cell inner membrane. Its function is as follows. Part of the twin-arginine translocation (Tat) system that transports large folded proteins containing a characteristic twin-arginine motif in their signal peptide across membranes. TatA could form the protein-conducting channel of the Tat system. In Paraburkholderia phymatum (strain DSM 17167 / CIP 108236 / LMG 21445 / STM815) (Burkholderia phymatum), this protein is Sec-independent protein translocase protein TatA.